The chain runs to 161 residues: Nucleotide-binding protein Reut_A2760 (161 aa).

This sequence belongs to the YajQ family.

Functionally, nucleotide-binding protein. This is Nucleotide-binding protein Reut_A2760 from Cupriavidus pinatubonensis (strain JMP 134 / LMG 1197) (Cupriavidus necator (strain JMP 134)).